Here is a 573-residue protein sequence, read N- to C-terminus: Urease subunit alpha 2 (573 aa).

The 439-residue stretch at 135-573 (GGMDTHVHYI…ISLNQLYFFS (439 aa)) folds into the Urease domain. Ni(2+)-binding residues include His-140, His-142, and Lys-223. Lys-223 carries the post-translational modification N6-carboxylysine. His-225 provides a ligand contact to substrate. Ni(2+) is bound by residues His-252 and His-278. His-326 functions as the Proton donor in the catalytic mechanism. A Ni(2+)-binding site is contributed by Asp-366.

It belongs to the metallo-dependent hydrolases superfamily. Urease alpha subunit family. Heterotrimer of UreA (gamma), UreB (beta) and UreC (alpha) subunits. Three heterotrimers associate to form the active enzyme. It depends on Ni cation as a cofactor. Carboxylation allows a single lysine to coordinate two nickel ions.

The protein localises to the cytoplasm. It carries out the reaction urea + 2 H2O + H(+) = hydrogencarbonate + 2 NH4(+). It functions in the pathway nitrogen metabolism; urea degradation; CO(2) and NH(3) from urea (urease route): step 1/1. In terms of biological role, disrupting the ure2 operon has no effect on urease activity or pathogen survival in BALB/c mice when administered orally. This chain is Urease subunit alpha 2, found in Brucella abortus (strain 2308).